We begin with the raw amino-acid sequence, 184 residues long: Dual specificity protein phosphatase 22 (184 aa).

The N-myristoyl glycine moiety is linked to residue Gly-2. Positions 4 to 144 (GMSQILPGLY…LQEFEKHEVH (141 aa)) constitute a Tyrosine-protein phosphatase domain. Cys-88 acts as the Phosphocysteine intermediate in catalysis. Residues Leu-89, Ala-90, Val-92, Ser-93, and Arg-94 each coordinate a protein.

This sequence belongs to the protein-tyrosine phosphatase family. Non-receptor class dual specificity subfamily. As to quaternary structure, monomer. Interacts with LCK; the interaction is direct. Interacts with UBR2; the interaction is direct. In terms of processing, myristoylation regulates subcellular location, and is necessary for activation of JNK.

The protein resides in the cytoplasm. The enzyme catalyses O-phospho-L-tyrosyl-[protein] + H2O = L-tyrosyl-[protein] + phosphate. The catalysed reaction is O-phospho-L-seryl-[protein] + H2O = L-seryl-[protein] + phosphate. It catalyses the reaction O-phospho-L-threonyl-[protein] + H2O = L-threonyl-[protein] + phosphate. In terms of biological role, dual specificity phosphatase; can dephosphorylate both phosphotyrosine and phosphoserine or phosphothreonine residues. Activates the JNK signaling pathway. Inhibits T-cell receptor signaling and T-cell mediated immune responses, acting, at least in part, by inducing degradation of E3 ubiquitin ligase UBR2. Dephosphorylates and thereby induces 'Lys-48'-linked ubiquitination of UBR2, leading to proteasomal degradation of UBR2. Dephosphorylates and thereby inactivates tyrosine kinase LCK. Inhibits UBR2-mediated 'Lys-63'-linked ubiquitination of LCK. May play a role in B-cell receptor (BCR) signaling and B-cell function. This is Dual specificity protein phosphatase 22 (Dusp22) from Mus musculus (Mouse).